The sequence spans 308 residues: tRNA dimethylallyltransferase 2 (308 aa).

An ATP-binding site is contributed by 13–20 (GPTASGKT). 15–20 (TASGKT) is a binding site for substrate. The interaction with substrate tRNA stretch occupies residues 38–41 (DSRQ).

It belongs to the IPP transferase family. As to quaternary structure, monomer. Mg(2+) serves as cofactor.

The enzyme catalyses adenosine(37) in tRNA + dimethylallyl diphosphate = N(6)-dimethylallyladenosine(37) in tRNA + diphosphate. Its function is as follows. Catalyzes the transfer of a dimethylallyl group onto the adenine at position 37 in tRNAs that read codons beginning with uridine, leading to the formation of N6-(dimethylallyl)adenosine (i(6)A). This Bacteroides fragilis (strain YCH46) protein is tRNA dimethylallyltransferase 2.